Reading from the N-terminus, the 470-residue chain is ATP synthase subunit beta (470 aa).

Residue 155–162 coordinates ATP; it reads GGAGVGKT.

This sequence belongs to the ATPase alpha/beta chains family. As to quaternary structure, F-type ATPases have 2 components, CF(1) - the catalytic core - and CF(0) - the membrane proton channel. CF(1) has five subunits: alpha(3), beta(3), gamma(1), delta(1), epsilon(1). CF(0) has three main subunits: a(1), b(2) and c(9-12). The alpha and beta chains form an alternating ring which encloses part of the gamma chain. CF(1) is attached to CF(0) by a central stalk formed by the gamma and epsilon chains, while a peripheral stalk is formed by the delta and b chains.

The protein resides in the cell membrane. The catalysed reaction is ATP + H2O + 4 H(+)(in) = ADP + phosphate + 5 H(+)(out). Functionally, produces ATP from ADP in the presence of a proton gradient across the membrane. The catalytic sites are hosted primarily by the beta subunits. The polypeptide is ATP synthase subunit beta (Staphylococcus epidermidis (strain ATCC 35984 / DSM 28319 / BCRC 17069 / CCUG 31568 / BM 3577 / RP62A)).